A 102-amino-acid chain; its full sequence is MASVKSSSSSSSSSFISLLLLILLVIVLQSQVIECQPQQSCTASLTGLNVCAPFLVPGSPTASTECCNAVQSINHDCMCNTMRIAAQIPAQCNLPPLSCSAN.

The signal sequence occupies residues 1 to 30; the sequence is MASVKSSSSSSSSSFISLLLLILLVIVLQS. Intrachain disulfides connect Cys-41–Cys-77, Cys-51–Cys-66, Cys-67–Cys-92, and Cys-79–Cys-99.

It belongs to the A9/FIL1 family. As to expression, stamen- and tapetum-specific.

The protein localises to the secreted. This chain is Protein 108, found in Solanum lycopersicum (Tomato).